Here is a 288-residue protein sequence, read N- to C-terminus: Damage-control phosphatase AF_1104 (288 aa).

The Subfamily I CxxC motif signature appears at 7–10 (CPSC). Mn(2+) is bound by residues aspartate 160, asparagine 161, and aspartate 194. Positions 247–250 (ANYE) match the Subfamily I GNFE-like motif motif. The Subfamily I KC motif motif lies at 267–268 (KC).

Belongs to the damage-control phosphatase family. Nucleotides phosphatase I subfamily. The cofactor is [2Fe-2S] cluster. Requires Mn(2+) as cofactor. It depends on Ni(2+) as a cofactor.

Its function is as follows. Metal-dependent phosphatase with probable damage-control functions. Could hydrolyze oxidatively damaged purine nucleotides or their biosynthetic intermediates. The chain is Damage-control phosphatase AF_1104 from Archaeoglobus fulgidus (strain ATCC 49558 / DSM 4304 / JCM 9628 / NBRC 100126 / VC-16).